A 320-amino-acid chain; its full sequence is Malate dehydrogenase (320 aa).

NAD(+)-binding positions include 10–15 (GAGQIG) and D34. Substrate-binding residues include R83 and R89. NAD(+) contacts are provided by residues N96 and 119-121 (ITN). Substrate contacts are provided by N121 and R152. The Proton acceptor role is filled by H176.

Belongs to the LDH/MDH superfamily. MDH type 3 family.

The enzyme catalyses (S)-malate + NAD(+) = oxaloacetate + NADH + H(+). Catalyzes the reversible oxidation of malate to oxaloacetate. In Cereibacter sphaeroides (strain ATCC 17029 / ATH 2.4.9) (Rhodobacter sphaeroides), this protein is Malate dehydrogenase.